A 423-amino-acid chain; its full sequence is Maltooligosaccharide ABC transporter solute-binding lipoprotein (423 aa).

The signal sequence occupies residues Met1–Ala24. Cys25 is lipidated: N-palmitoyl cysteine. Residue Cys25 is the site of S-diacylglycerol cysteine attachment. Residues Tyr52, Asp77, Asp83, Asp103–Arg104, Glu148, Asp193, Asn196, Glu251–Gly254, Trp274, and Lys307 contribute to the substrate site.

The protein belongs to the bacterial solute-binding protein 1 family.

The protein localises to the cell membrane. In terms of biological role, part of an ABC transporter complex involved in the uptake of maltodextrins. Binds glycogen-derived linear maltooligosaccharides increasing in size from maltotriose to maltooctaose with the highest affinity for maltotriose. Has a very weak affinity for maltose. Has also a very low affinity for maltotetraitol, indicating that the binding is selective for maltooligosaccharides with an intact reducing end. In Streptococcus pneumoniae serotype 4 (strain ATCC BAA-334 / TIGR4), this protein is Maltooligosaccharide ABC transporter solute-binding lipoprotein.